The following is a 260-amino-acid chain: 3'-5' ssDNA/RNA exonuclease TatD (260 aa).

Residues glutamate 91, histidine 127, and histidine 152 each contribute to the a divalent metal cation site.

This sequence belongs to the metallo-dependent hydrolases superfamily. TatD-type hydrolase family. TatD subfamily. Monomer. Mg(2+) serves as cofactor.

Its subcellular location is the cytoplasm. Its function is as follows. 3'-5' exonuclease that prefers single-stranded DNA and RNA. May play a role in the H(2)O(2)-induced DNA damage repair. The chain is 3'-5' ssDNA/RNA exonuclease TatD from Citrobacter koseri (strain ATCC BAA-895 / CDC 4225-83 / SGSC4696).